The chain runs to 139 residues: Glutamate mutase sigma subunit (139 aa).

A B12-binding domain is found at 4–139 (KIKLVLGVIG…DLHADFPDHA (136 aa)). Adenosylcob(III)alamin contacts are provided by residues 14–18 (SDCHA), histidine 17, 62–64 (SSL), and 94–98 (NIVVG).

Belongs to the methylaspartate mutase GlmS subunit family. As to quaternary structure, heterotetramer composed of 2 epsilon subunits (GlmE) and 2 sigma subunits (GlmS). GlmE exists as a homodimer and GlmS as a monomer. The cofactor is adenosylcob(III)alamin.

The enzyme catalyses (2S,3S)-3-methyl-L-aspartate = L-glutamate. It functions in the pathway amino-acid degradation; L-glutamate degradation via mesaconate pathway; acetate and pyruvate from L-glutamate: step 1/4. Catalyzes the carbon skeleton rearrangement of L-glutamate to L-threo-3-methylaspartate ((2S,3S)-3-methylaspartate). The protein is Glutamate mutase sigma subunit of Treponema denticola (strain ATCC 35405 / DSM 14222 / CIP 103919 / JCM 8153 / KCTC 15104).